An 863-amino-acid polypeptide reads, in one-letter code: Alanine--tRNA ligase (863 aa).

Zn(2+) is bound by residues His552, His556, Cys656, and His660.

This sequence belongs to the class-II aminoacyl-tRNA synthetase family. Requires Zn(2+) as cofactor.

The protein localises to the cytoplasm. The enzyme catalyses tRNA(Ala) + L-alanine + ATP = L-alanyl-tRNA(Ala) + AMP + diphosphate. Its function is as follows. Catalyzes the attachment of alanine to tRNA(Ala) in a two-step reaction: alanine is first activated by ATP to form Ala-AMP and then transferred to the acceptor end of tRNA(Ala). Also edits incorrectly charged Ser-tRNA(Ala) and Gly-tRNA(Ala) via its editing domain. The sequence is that of Alanine--tRNA ligase from Alcanivorax borkumensis (strain ATCC 700651 / DSM 11573 / NCIMB 13689 / SK2).